The chain runs to 131 residues: Small ribosomal subunit protein uS8c (131 aa).

Belongs to the universal ribosomal protein uS8 family. In terms of assembly, part of the 30S ribosomal subunit.

It localises to the plastid. Its subcellular location is the chloroplast. Its function is as follows. One of the primary rRNA binding proteins, it binds directly to 16S rRNA central domain where it helps coordinate assembly of the platform of the 30S subunit. The protein is Small ribosomal subunit protein uS8c (rps8) of Tupiella akineta (Green alga).